Here is a 243-residue protein sequence, read N- to C-terminus: Cell division protein ZipA (243 aa).

Topologically, residues 1–4 (MSDV) are periplasmic. A helical membrane pass occupies residues 5–25 (TLLRIGIAIVGILFVAAVFFF). Residues 26–243 (STPKTSAHRV…VPPLIKNSRW (218 aa)) lie on the Cytoplasmic side of the membrane. The interval 32–89 (AHRVRTKKEEPPRERREPMLSTEVDNSPHQSVDEVPASVPQQQVNPEATKPGEIELGK) is disordered. Residues 38–49 (KKEEPPRERREP) show a composition bias toward basic and acidic residues.

This sequence belongs to the ZipA family. Interacts with FtsZ via their C-terminal domains.

It is found in the cell inner membrane. Functionally, essential cell division protein that stabilizes the FtsZ protofilaments by cross-linking them and that serves as a cytoplasmic membrane anchor for the Z ring. Also required for the recruitment to the septal ring of downstream cell division proteins. The polypeptide is Cell division protein ZipA (Xylella fastidiosa (strain Temecula1 / ATCC 700964)).